The chain runs to 593 residues: NADH-quinone oxidoreductase subunit C/D (593 aa).

Residues 1 to 184 form an NADH dehydrogenase I subunit C region; it reads MTTGSALYIP…DPFSLNLAKQ (184 aa). The NADH dehydrogenase I subunit D stretch occupies residues 208 to 593; that stretch reads DYMFLNLGPN…IDFVMADVDR (386 aa).

The protein in the N-terminal section; belongs to the complex I 30 kDa subunit family. This sequence in the C-terminal section; belongs to the complex I 49 kDa subunit family. NDH-1 is composed of 13 different subunits. Subunits NuoB, CD, E, F, and G constitute the peripheral sector of the complex.

It is found in the cell inner membrane. The catalysed reaction is a quinone + NADH + 5 H(+)(in) = a quinol + NAD(+) + 4 H(+)(out). Functionally, NDH-1 shuttles electrons from NADH, via FMN and iron-sulfur (Fe-S) centers, to quinones in the respiratory chain. The immediate electron acceptor for the enzyme in this species is believed to be ubiquinone. Couples the redox reaction to proton translocation (for every two electrons transferred, four hydrogen ions are translocated across the cytoplasmic membrane), and thus conserves the redox energy in a proton gradient. The polypeptide is NADH-quinone oxidoreductase subunit C/D (Pseudomonas fluorescens (strain ATCC BAA-477 / NRRL B-23932 / Pf-5)).